We begin with the raw amino-acid sequence, 652 residues long: DNA ligase (652 aa).

NAD(+) is bound by residues 29-33 (DSEYD), 78-79 (SL), and glutamate 107. Lysine 109 acts as the N6-AMP-lysine intermediate in catalysis. Arginine 130, glutamate 164, lysine 278, and lysine 302 together coordinate NAD(+). Zn(2+)-binding residues include cysteine 395, cysteine 398, cysteine 413, and cysteine 418. The BRCT domain maps to 577-652 (VADAALSGLT…VRDEAWLESL (76 aa)).

It belongs to the NAD-dependent DNA ligase family. LigA subfamily. Mg(2+) is required as a cofactor. Mn(2+) serves as cofactor.

The enzyme catalyses NAD(+) + (deoxyribonucleotide)n-3'-hydroxyl + 5'-phospho-(deoxyribonucleotide)m = (deoxyribonucleotide)n+m + AMP + beta-nicotinamide D-nucleotide.. In terms of biological role, DNA ligase that catalyzes the formation of phosphodiester linkages between 5'-phosphoryl and 3'-hydroxyl groups in double-stranded DNA using NAD as a coenzyme and as the energy source for the reaction. It is essential for DNA replication and repair of damaged DNA. The sequence is that of DNA ligase from Streptococcus pneumoniae serotype 2 (strain D39 / NCTC 7466).